Here is a 280-residue protein sequence, read N- to C-terminus: MLMQIADFEIGLNNPLFLIAGPCVIESEALVMDVAGELKSITQQLDMPFIFKASFDKANRSSHLSYRGPGIEKGLTILEKVKKTLEVPIITDVHEDTPLQEVAAVVDVLQTPAFLCRQSNFIRSVAACGKPVNIKKGQFLAPWEMKQVVAKAWATGNKKIMVCERGYSFGYNNLISDMRALAILRETACPVIFDATHSVQLPGGHGTSSGGQRKFVPVLARAATAAGIAGIFMETHPDPDRALSDGPNSWPLAKMQPLLETLKELDKVVKNAGFLEQSSE.

This sequence belongs to the KdsA family.

It localises to the cytoplasm. The catalysed reaction is D-arabinose 5-phosphate + phosphoenolpyruvate + H2O = 3-deoxy-alpha-D-manno-2-octulosonate-8-phosphate + phosphate. Its pathway is carbohydrate biosynthesis; 3-deoxy-D-manno-octulosonate biosynthesis; 3-deoxy-D-manno-octulosonate from D-ribulose 5-phosphate: step 2/3. The protein operates within bacterial outer membrane biogenesis; lipopolysaccharide biosynthesis. This Coxiella burnetii (strain Dugway 5J108-111) protein is 2-dehydro-3-deoxyphosphooctonate aldolase.